We begin with the raw amino-acid sequence, 1219 residues long: Pleckstrin homology domain-containing family G member 3 (1219 aa).

The span at 1–10 (MPVSTSLHQD) shows a compositional bias: polar residues. The tract at residues 1 to 66 (MPVSTSLHQD…HLPNSNNNSS (66 aa)) is disordered. The segment covering 18–46 (SLTSTTSSSGSSCDSRSAMEEPSSSEAPA) has biased composition (low complexity). Position 76 is a phosphoserine (Ser76). The region spanning 93–272 (YLGRVVREIV…TCVAWYINDM (180 aa)) is the DH domain. One can recognise a PH domain in the interval 296 to 394 (DLTTYGELVL…WTHHIKRLIL (99 aa)). The segment covering 431–442 (WSSQDEVSTNVR) has biased composition (polar residues). 2 disordered regions span residues 431–599 (WSSQ…PSVL) and 613–708 (FSRR…KESA). The residue at position 433 (Ser433) is a Phosphoserine. Over residues 446 to 463 (RQSEPTKHLLRQLNEKAR) the composition is skewed to basic and acidic residues. Residues Ser576, Ser577, Ser618, Ser631, Ser640, Ser643, and Ser647 each carry the phosphoserine modification. The span at 630–645 (GSPRLVSRSSSVLSLE) shows a compositional bias: low complexity. The span at 696 to 708 (EPDRSSCKKKESA) shows a compositional bias: basic and acidic residues. A phosphoserine mark is found at Ser741, Ser779, and Ser827. Disordered regions lie at residues 756–780 (RFNS…VGSR), 821–840 (MESS…ANGF), 859–878 (EESA…RSPA), 955–1133 (APER…LYVT), and 1146–1207 (VMEK…RVRN). Over residues 826 to 836 (GSPGKGPGQGQ) the composition is skewed to gly residues. Residues 859 to 873 (EESATASPESSSPTE) show a composition bias toward low complexity. A phosphoserine mark is found at Ser962, Ser1011, Ser1023, Ser1037, and Ser1040. Residues 1020–1029 (SAVSQRTTSP) are compositionally biased toward polar residues. Basic and acidic residues predominate over residues 1049–1065 (DVRELCSKYASRDEARR). Ser1081 is subject to Phosphoserine. Omega-N-methylarginine is present on Arg1107. Positions 1187 to 1197 (QPKEEGSRDPA) are enriched in basic and acidic residues.

It is found in the cytoplasm. The protein localises to the cytoskeleton. Its function is as follows. Plays a role in controlling cell polarity and cell motility by selectively binding newly polymerized actin and activating RAC1 and CDC42 to enhance local actin polymerization. This Homo sapiens (Human) protein is Pleckstrin homology domain-containing family G member 3.